Here is a 157-residue protein sequence, read N- to C-terminus: Dihydrofolate reductase type 1 (157 aa).

Residues Lys-2–Lys-156 enclose the DHFR domain.

The protein belongs to the dihydrofolate reductase family. Homodimer.

The enzyme catalyses (6S)-5,6,7,8-tetrahydrofolate + NADP(+) = 7,8-dihydrofolate + NADPH + H(+). It participates in cofactor biosynthesis; tetrahydrofolate biosynthesis; 5,6,7,8-tetrahydrofolate from 7,8-dihydrofolate: step 1/1. In terms of biological role, key enzyme in folate metabolism. Catalyzes an essential reaction for de novo glycine and purine synthesis, and for DNA precursor synthesis. This chain is Dihydrofolate reductase type 1 (dhfrI), found in Escherichia coli.